We begin with the raw amino-acid sequence, 131 residues long: Large ribosomal subunit protein bL12 (131 aa).

This sequence belongs to the bacterial ribosomal protein bL12 family. In terms of assembly, homodimer. Part of the ribosomal stalk of the 50S ribosomal subunit. Forms a multimeric L10(L12)X complex, where L10 forms an elongated spine to which 2 to 4 L12 dimers bind in a sequential fashion. Binds GTP-bound translation factors.

In terms of biological role, forms part of the ribosomal stalk which helps the ribosome interact with GTP-bound translation factors. Is thus essential for accurate translation. In Prochlorococcus marinus (strain MIT 9215), this protein is Large ribosomal subunit protein bL12.